A 780-amino-acid polypeptide reads, in one-letter code: Aconitate hydratase, mitochondrial (780 aa).

Residues 1–27 (MAPYSLLVTRLQKALGVRQYHVASVLC) constitute a mitochondrion transit peptide. Lys31 carries the N6-succinyllysine modification. Lys50 is subject to N6-acetyllysine; alternate. Lys50 is subject to N6-succinyllysine; alternate. Position 99 (Gln99) interacts with substrate. N6-acetyllysine; alternate is present on residues Lys138 and Lys144. Lys138 and Lys144 each carry N6-succinyllysine; alternate. 192-194 (DSH) is a binding site for substrate. Residue Lys233 is modified to N6-acetyllysine; alternate. Lys233 carries the post-translational modification N6-succinyllysine; alternate. Residue Cys385 participates in [4Fe-4S] cluster binding. Lys411 is modified (N6-succinyllysine). Cys448 and Cys451 together coordinate [4Fe-4S] cluster. The substrate site is built by Arg474 and Arg479. Positions 528–537 (DADELPKGEF) are enriched in basic and acidic residues. The interval 528–560 (DADELPKGEFDPGQDTYQHPPKDSSGQHVDVSP) is disordered. Lys549 is modified (N6-succinyllysine). Over residues 551–560 (SSGQHVDVSP) the composition is skewed to polar residues. Residue Ser559 is modified to Phosphoserine. N6-acetyllysine; alternate is present on Lys573. Lys573 carries the N6-succinyllysine; alternate modification. Lys577 and Lys591 each carry N6-succinyllysine. Lys605 is subject to N6-acetyllysine; alternate. Lys605 carries the post-translational modification N6-succinyllysine; alternate. Substrate is bound at residue Arg607. Residue Lys628 is modified to N6-succinyllysine. Ser670 bears the Phosphoserine mark. 670 to 671 (SR) contacts substrate. N6-succinyllysine is present on Lys689. N6-acetyllysine; alternate occurs at positions 723 and 730. N6-succinyllysine; alternate occurs at positions 723 and 730. 3 positions are modified to N6-acetyllysine: Lys736, Lys739, and Lys743.

Belongs to the aconitase/IPM isomerase family. In terms of assembly, monomer. [4Fe-4S] cluster serves as cofactor. Post-translationally, forms covalent cross-links mediated by transglutaminase TGM2, between a glutamine and the epsilon-amino group of a lysine residue, forming homopolymers and heteropolymers.

It localises to the mitochondrion. It catalyses the reaction citrate = D-threo-isocitrate. The protein operates within carbohydrate metabolism; tricarboxylic acid cycle; isocitrate from oxaloacetate: step 2/2. In terms of biological role, catalyzes the isomerization of citrate to isocitrate via cis-aconitate. The protein is Aconitate hydratase, mitochondrial (ACO2) of Homo sapiens (Human).